The sequence spans 37 residues: Cytochrome b6-f complex subunit 5 (37 aa).

Residues 5-25 (FLFGIVLGLIPITLAGLFVTA) traverse the membrane as a helical segment.

Belongs to the PetG family. In terms of assembly, the 4 large subunits of the cytochrome b6-f complex are cytochrome b6, subunit IV (17 kDa polypeptide, PetD), cytochrome f and the Rieske protein, while the 4 small subunits are PetG, PetL, PetM and PetN. The complex functions as a dimer.

The protein localises to the plastid thylakoid membrane. Its function is as follows. Component of the cytochrome b6-f complex, which mediates electron transfer between photosystem II (PSII) and photosystem I (PSI), cyclic electron flow around PSI, and state transitions. PetG is required for either the stability or assembly of the cytochrome b6-f complex. The sequence is that of Cytochrome b6-f complex subunit 5 from Cuscuta reflexa (Southern Asian dodder).